We begin with the raw amino-acid sequence, 476 residues long: CBL-interacting protein kinase 30 (476 aa).

In terms of domain architecture, Protein kinase spans 17–272 (YKLGRLLGRG…ISKIMDRPWF (256 aa)). ATP is bound by residues 23–31 (LGRGTFAKV) and K46. The active-site Proton acceptor is the D140. The activation loop stretch occupies residues 158 to 187 (DFGLSALDGGLRGDGLLHTTCGTPAYVAPE). A disordered region spans residues 296-315 (KEASQQHDDEEDDGFAREKK). Residues 299–353 (SQQHDDEEDDGFAREKKKRSNVIMSSPVIDVRPSSMNAFDIISRSRGLDLSKMFD) form the NAF domain. Positions 358–387 (RSEARFSTRETTTAIVSKLEEIAEAGRFSF) are PPI.

This sequence belongs to the protein kinase superfamily. CAMK Ser/Thr protein kinase family. SNF1 subfamily. Mn(2+) serves as cofactor.

The catalysed reaction is L-seryl-[protein] + ATP = O-phospho-L-seryl-[protein] + ADP + H(+). The enzyme catalyses L-threonyl-[protein] + ATP = O-phospho-L-threonyl-[protein] + ADP + H(+). CIPK serine-threonine protein kinases interact with CBL proteins. Binding of a CBL protein to the regulatory NAF domain of CIPK protein lead to the activation of the kinase in a calcium-dependent manner. This Oryza sativa subsp. japonica (Rice) protein is CBL-interacting protein kinase 30 (CIPK30).